The following is a 316-amino-acid chain: Olfactory receptor 2AG2 (316 aa).

At 1-30 the chain is on the extracellular side; that stretch reads MELRNSTLGSGFILVGILNDSGSPELLYAT. N-linked (GlcNAc...) asparagine glycosylation is found at Asn5 and Asn19. A helical transmembrane segment spans residues 31-51; it reads FTILYMLALTSNGLLLLAITI. At 52–56 the chain is on the cytoplasmic side; that stretch reads EARLH. The chain crosses the membrane as a helical span at residues 57 to 77; the sequence is MPMYLLLGQLSLMDLLFTSVV. The Extracellular portion of the chain corresponds to 78 to 97; that stretch reads TPKALADFLRRENTISFGGC. Cysteines 97 and 179 form a disulfide. Residues 98–118 traverse the membrane as a helical segment; it reads ALQMFLALTMGSAEDLLLAFM. The Cytoplasmic portion of the chain corresponds to 119–139; sequence AYDRYVAICHPLKYMTLMSPR. A helical transmembrane segment spans residues 140–160; sequence VCWIMVATSWILASLIAIGHT. The Extracellular portion of the chain corresponds to 161 to 205; it reads MYTMHLPFCVSWEIRHLLCEIPPLLKLACADTSRYELIIYVTGVT. A helical transmembrane segment spans residues 206-226; it reads FLLLPISAIVASYTLVLFTVL. Residues 227-244 lie on the Cytoplasmic side of the membrane; the sequence is RMPSNEGRKKALVTCSSH. Residues 245–265 form a helical membrane-spanning segment; that stretch reads LIVVGMFYGAATFMYVLPSSF. Residues 266–271 lie on the Extracellular side of the membrane; that stretch reads HSPKQD. The helical transmembrane segment at 272–292 threads the bilayer; sequence NIISVFYTIVTPALNPLIYSL. Residues 293–316 lie on the Cytoplasmic side of the membrane; that stretch reads RNKEVMRALRRVLGKYILLAHSTL.

Belongs to the G-protein coupled receptor 1 family.

The protein localises to the cell membrane. Its function is as follows. Odorant receptor. The polypeptide is Olfactory receptor 2AG2 (OR2AG2) (Homo sapiens (Human)).